Reading from the N-terminus, the 84-residue chain is MKVSVLITLAVLGVMFLLTSAEERGSDQMDSPAWLKSMERIFQSEERECRWLFGGCEKDSDCCEHLGCRRAKPSWCGWDFTFGK.

The signal sequence occupies residues Met-1–Ala-21. Positions Glu-22–Arg-47 are excised as a propeptide. Cystine bridges form between Cys-49–Cys-63, Cys-56–Cys-68, and Cys-62–Cys-76. Phenylalanine amide is present on Phe-82.

It belongs to the neurotoxin 10 (Hwtx-1) family. 05 (F4a) subfamily. As to expression, expressed by the venom gland.

It localises to the secreted. Probable ion channel inhibitor. This chain is U21-theraphotoxin-Cg1b, found in Chilobrachys guangxiensis (Chinese earth tiger tarantula).